The primary structure comprises 124 residues: Large ribosomal subunit protein uL14 (124 aa).

It belongs to the universal ribosomal protein uL14 family. As to quaternary structure, part of the 50S ribosomal subunit. Forms a cluster with proteins L3 and L19. In the 70S ribosome, L14 and L19 interact and together make contacts with the 16S rRNA in bridges B5 and B8.

Its function is as follows. Binds to 23S rRNA. Forms part of two intersubunit bridges in the 70S ribosome. The sequence is that of Large ribosomal subunit protein uL14 from Clostridium novyi (strain NT).